Consider the following 42-residue polypeptide: Crotamine-IV-2 (42 aa).

Intrachain disulfides connect Cys4–Cys37, Cys11–Cys31, and Cys19–Cys38.

It belongs to the crotamine-myotoxin family. As to quaternary structure, monomer. Expressed by the venom gland.

It is found in the secreted. Cationic peptide that possesses multiple functions. It acts as a cell-penetrating peptide (CPP), and as a potent voltage-gated potassium channel (Kv) inhibitor. It exhibits antimicrobial activities, and hind limb paralysis. It also induces potent blockade of neuromuscular transmission in young chicken biventer cervicis preparation and potent myotoxic effect. In vivo, induces myonecrosis, upon intramuscular or subcutaneous injections into mice. This Crotalus durissus cumanensis (South American rattlesnake) protein is Crotamine-IV-2.